Consider the following 47-residue polypeptide: Large ribosomal subunit protein bL34 (47 aa).

Belongs to the bacterial ribosomal protein bL34 family.

This Mycolicibacterium smegmatis (strain ATCC 700084 / mc(2)155) (Mycobacterium smegmatis) protein is Large ribosomal subunit protein bL34 (rpmH).